Here is a 223-residue protein sequence, read N- to C-terminus: Golgi SNAP receptor complex member 1-1 (223 aa).

Residues 1–201 (MDVPSSWDAL…AAIKRKKSMD (201 aa)) lie on the Cytoplasmic side of the membrane. Residues 8–67 (DALRKQARKIEAQLDEQMHSYRRLVSTKALSKSDGNESDLEAGIDLLLRQLQQVNAQMQA) are a coiled coil. A helical; Anchor for type IV membrane protein transmembrane segment spans residues 202 to 222 (TIILSLVAAVCTFLIFIYWIT). A topological domain (vesicular) is located at residue Lys-223.

Belongs to the GOSR1 family. In terms of assembly, component of several multiprotein Golgi SNARE complexes.

It localises to the golgi apparatus membrane. Involved in transport from the ER to the Golgi apparatus as well as in intra-Golgi transport. It belongs to a super-family of proteins called t-SNAREs or soluble NSF (N-ethylmaleimide-sensitive factor) attachment protein receptor. The sequence is that of Golgi SNAP receptor complex member 1-1 (GOS11) from Arabidopsis thaliana (Mouse-ear cress).